A 277-amino-acid chain; its full sequence is Large ribosomal subunit protein uL2c (277 aa).

Residues 228–254 (VDHPHGGGEGRCPVGHAQPRTPWGKPA) form a disordered region.

This sequence belongs to the universal ribosomal protein uL2 family. Part of the 50S ribosomal subunit.

Its subcellular location is the plastid. The protein resides in the chloroplast. This chain is Large ribosomal subunit protein uL2c (rpl2), found in Ostreococcus tauri.